Consider the following 131-residue polypeptide: Histone H2A.1 (131 aa).

Position 2 is an N-acetylserine (serine 2). N6-acetyllysine is present on residues lysine 5 and lysine 8. Glutamine 106 is subject to N5-methylglutamine. At serine 128 the chain carries Phosphoserine. A [ST]-Q motif motif is present at residues 128–129; the sequence is SQ.

The protein belongs to the histone H2A family. The nucleosome is a histone octamer containing two molecules each of H2A, H2B, H3 and H4 assembled in one H3-H4 heterotetramer and two H2A-H2B heterodimers. The octamer wraps approximately 147 bp of DNA. In terms of processing, phosphorylated to form H2AS128ph (gamma-H2A) in response to DNA double-strand breaks (DSBs) generated by exogenous genotoxic agents and by stalled replication forks. Phosphorylation is dependent on the DNA damage checkpoint kinases MEC1/ATR and TEL1/ATM, spreads on either side of a detected DSB site and may mark the surrounding chromatin for recruitment of proteins required for DNA damage signaling and repair. Gamma-H2A is removed from the DNA prior to the strand invasion-primer extension step of the repair process and subsequently dephosphorylated by PPH3, a component of the histone H2A phosphatase complex (HTP-C). Dephosphorylation is necessary for efficient recovery from the DNA damage checkpoint. Post-translationally, acetylated by ESA1 to form H2AK4ac and H2AK7ac.

The protein localises to the nucleus. Its subcellular location is the chromosome. Its function is as follows. Core component of nucleosome which plays a central role in DNA double strand break (DSB) repair. Nucleosomes wrap and compact DNA into chromatin, limiting DNA accessibility to the cellular machineries which require DNA as a template. Histones thereby play a central role in transcription regulation, DNA repair, DNA replication and chromosomal stability. DNA accessibility is regulated via a complex set of post-translational modifications of histones, also called histone code, and nucleosome remodeling. This is Histone H2A.1 (HTA1) from Candida glabrata (strain ATCC 2001 / BCRC 20586 / JCM 3761 / NBRC 0622 / NRRL Y-65 / CBS 138) (Yeast).